The chain runs to 121 residues: Small ribosomal subunit protein uS13 (121 aa).

Positions 94 to 121 are disordered; it reads RGLPVRGQSTKNNARTRKGPKRTVGAKR. Over residues 107 to 121 the composition is skewed to basic residues; it reads ARTRKGPKRTVGAKR.

Belongs to the universal ribosomal protein uS13 family. In terms of assembly, part of the 30S ribosomal subunit. Forms a loose heterodimer with protein S19. Forms two bridges to the 50S subunit in the 70S ribosome.

In terms of biological role, located at the top of the head of the 30S subunit, it contacts several helices of the 16S rRNA. In the 70S ribosome it contacts the 23S rRNA (bridge B1a) and protein L5 of the 50S subunit (bridge B1b), connecting the 2 subunits; these bridges are implicated in subunit movement. Contacts the tRNAs in the A and P-sites. This Natranaerobius thermophilus (strain ATCC BAA-1301 / DSM 18059 / JW/NM-WN-LF) protein is Small ribosomal subunit protein uS13.